Here is a 447-residue protein sequence, read N- to C-terminus: GTPase Der (447 aa).

EngA-type G domains follow at residues 4-165 (KIIA…PEEE) and 180-357 (LQIV…KIWN). Residues 10 to 17 (GRPNVGKS), 57 to 61 (DTPGL), 119 to 122 (NKCE), 186 to 193 (GRPNAGKS), 233 to 237 (DTAGL), and 298 to 301 (NKWD) each bind GTP. Residues 358–443 (KKIATSKLNE…PIRFTYVKTK (86 aa)) form the KH-like domain.

The protein belongs to the TRAFAC class TrmE-Era-EngA-EngB-Septin-like GTPase superfamily. EngA (Der) GTPase family. In terms of assembly, associates with the 50S ribosomal subunit.

GTPase that plays an essential role in the late steps of ribosome biogenesis. The sequence is that of GTPase Der from Rickettsia akari (strain Hartford).